The sequence spans 326 residues: Fructose-1,6-bisphosphatase class 1 (326 aa).

4 residues coordinate Mg(2+): glutamate 90, aspartate 111, leucine 113, and aspartate 114. Substrate is bound by residues 114-117, tyrosine 222, and lysine 253; that span reads DGSS. Glutamate 259 provides a ligand contact to Mg(2+).

This sequence belongs to the FBPase class 1 family. As to quaternary structure, homotetramer. Mg(2+) is required as a cofactor.

It is found in the cytoplasm. The enzyme catalyses beta-D-fructose 1,6-bisphosphate + H2O = beta-D-fructose 6-phosphate + phosphate. It functions in the pathway carbohydrate biosynthesis; gluconeogenesis. In Citrifermentans bemidjiense (strain ATCC BAA-1014 / DSM 16622 / JCM 12645 / Bem) (Geobacter bemidjiensis), this protein is Fructose-1,6-bisphosphatase class 1.